The sequence spans 274 residues: Protein YeeZ (274 aa).

Positions 1-24 (MKKVAIVGLGWLGMPLAMSLSARG) are cleaved as a signal peptide. Residue 170-177 (GRFFAGKT) coordinates ATP.

The protein is Protein YeeZ (yeeZ) of Escherichia coli O157:H7.